Reading from the N-terminus, the 242-residue chain is Response regulator GtcR (242 aa).

One can recognise a Response regulatory domain in the interval 4–117 (TILIADDEPE…EAVARIQAQL (114 aa)). Position 53 is a 4-aspartylphosphate (D53). Positions 133–233 (TQSTTVGRLT…VRGLGYKFAS (101 aa)) form a DNA-binding region, ompR/PhoB-type.

In terms of processing, phosphorylated by GtcS.

Member of the two-component regulatory system GtcS/GtcR which may act in the control of the transcription of the grs operon which encodes the multienzymes involved in the biosynthesis of the peptide antibiotic gramicidin S. The chain is Response regulator GtcR (gtcR) from Aneurinibacillus migulanus (Bacillus migulanus).